Here is a 249-residue protein sequence, read N- to C-terminus: MERLLIVNADDFGLSKGQNYGIIEACRNGIVTSTTALVNGQAIDHAVQLSRDEPSLAIGMHFVLTMGKPLTAMPGLTRDGVLGKWIWQLAEEDALPLEEITQELVSQYLRFIELFGRKPTHLDSHHHVHMFPQIFPIVARFAAEQGIALRADRQMAFDLPVNLRTTQGFSSAFYGEEISESLFLQVLDDAGHRGDRSLEVMCHPAFIDNTIRQSAYCFPRLTELDVLTSASLKGAIAQRGYRLGSYRDV.

2 residues coordinate Mg(2+): H61 and H125.

The protein belongs to the YdjC deacetylase family. ChbG subfamily. As to quaternary structure, homodimer. Mg(2+) serves as cofactor.

The protein resides in the cytoplasm. The catalysed reaction is N,N'-diacetylchitobiose + H2O = N-acetyl-beta-D-glucosaminyl-(1-&gt;4)-D-glucosamine + acetate. It catalyses the reaction diacetylchitobiose-6'-phosphate + H2O = N'-monoacetylchitobiose-6'-phosphate + acetate. It functions in the pathway glycan degradation; chitin degradation. Involved in the degradation of chitin. ChbG is essential for growth on the acetylated chitooligosaccharides chitobiose and chitotriose but is dispensable for growth on cellobiose and chitosan dimer, the deacetylated form of chitobiose. Deacetylation of chitobiose-6-P and chitotriose-6-P is necessary for both the activation of the chb promoter by the regulatory protein ChbR and the hydrolysis of phosphorylated beta-glucosides by the phospho-beta-glucosidase ChbF. Catalyzes the removal of only one acetyl group from chitobiose-6-P to yield monoacetylchitobiose-6-P, the inducer of ChbR and the substrate of ChbF. The protein is Chitooligosaccharide deacetylase of Escherichia coli (strain K12 / MC4100 / BW2952).